The chain runs to 269 residues: 4-hydroxy-tetrahydrodipicolinate reductase (269 aa).

Residues 8–13 (GAAGRM), Glu34, 98–100 (GTT), and 122–125 (APNY) contribute to the NAD(+) site. His155 functions as the Proton donor/acceptor in the catalytic mechanism. His156 contacts (S)-2,3,4,5-tetrahydrodipicolinate. The active-site Proton donor is Lys159. Residue 165 to 166 (GT) coordinates (S)-2,3,4,5-tetrahydrodipicolinate.

This sequence belongs to the DapB family.

It localises to the cytoplasm. The catalysed reaction is (S)-2,3,4,5-tetrahydrodipicolinate + NAD(+) + H2O = (2S,4S)-4-hydroxy-2,3,4,5-tetrahydrodipicolinate + NADH + H(+). It catalyses the reaction (S)-2,3,4,5-tetrahydrodipicolinate + NADP(+) + H2O = (2S,4S)-4-hydroxy-2,3,4,5-tetrahydrodipicolinate + NADPH + H(+). Its pathway is amino-acid biosynthesis; L-lysine biosynthesis via DAP pathway; (S)-tetrahydrodipicolinate from L-aspartate: step 4/4. Its function is as follows. Catalyzes the conversion of 4-hydroxy-tetrahydrodipicolinate (HTPA) to tetrahydrodipicolinate. The chain is 4-hydroxy-tetrahydrodipicolinate reductase from Aliivibrio salmonicida (strain LFI1238) (Vibrio salmonicida (strain LFI1238)).